Reading from the N-terminus, the 148-residue chain is Large ribosomal subunit protein uL13 (148 aa).

Basic and acidic residues-rich tracts occupy residues 71–81 (GKKEKQKEYHE) and 89–99 (DHSHSPEEMRA). 2 disordered regions span residues 71–99 (GKKE…EMRA) and 125–148 (KKLK…LDNA).

This sequence belongs to the universal ribosomal protein uL13 family. In terms of assembly, part of the 50S ribosomal subunit.

Functionally, this protein is one of the early assembly proteins of the 50S ribosomal subunit, although it is not seen to bind rRNA by itself. It is important during the early stages of 50S assembly. The polypeptide is Large ribosomal subunit protein uL13 (Salinibacter ruber (strain DSM 13855 / M31)).